A 124-amino-acid chain; its full sequence is Large ribosomal subunit protein bL20 (124 aa).

It belongs to the bacterial ribosomal protein bL20 family.

In terms of biological role, binds directly to 23S ribosomal RNA and is necessary for the in vitro assembly process of the 50S ribosomal subunit. It is not involved in the protein synthesizing functions of that subunit. In Ehrlichia chaffeensis (strain ATCC CRL-10679 / Arkansas), this protein is Large ribosomal subunit protein bL20.